Here is a 287-residue protein sequence, read N- to C-terminus: Prepilin leader peptidase/N-methyltransferase (287 aa).

Residues 12 to 32 (FMYLVVGLFSLAVGSLLNVII) traverse the membrane as a helical segment. Residues cysteine 71, cysteine 74, cysteine 96, and cysteine 99 each coordinate Zn(2+). The next 5 membrane-spanning stretches (helical) occupy residues 127-147 (FTIQ…LVFI), 158-178 (LTLG…FVSL), 182-202 (VLSC…FYLM), 215-235 (LFAA…LLIS), and 259-279 (PFGP…DSII).

Belongs to the peptidase A24 family. Requires Zn(2+) as cofactor.

The protein resides in the cell inner membrane. It carries out the reaction Typically cleaves a -Gly-|-Phe- bond to release an N-terminal, basic peptide of 5-8 residues from type IV prepilin, and then N-methylates the new N-terminal amino group, the methyl donor being S-adenosyl-L-methionine.. Its function is as follows. Plays an essential role in type IV pili and type II pseudopili formation by proteolytically removing the leader sequence from substrate proteins and subsequently monomethylating the alpha-amino group of the newly exposed N-terminal phenylalanine. In Legionella pneumophila, this protein is Prepilin leader peptidase/N-methyltransferase (pilD).